A 535-amino-acid chain; its full sequence is uncharacterized protein (535 aa).

Residues 1–34 (MKAIDNQIRNISSSHQDKHSDKVNSHQHHGKVDK) are disordered. Residues 15 to 34 (HQDKHSDKVNSHQHHGKVDK) show a composition bias toward basic and acidic residues.

This is an uncharacterized protein from Escherichia coli (strain K12).